The sequence spans 344 residues: L-rhamnose-proton symporter (344 aa).

The next 10 membrane-spanning stretches (helical) occupy residues 4–24, 38–58, 68–88, 101–121, 131–151, 175–195, 214–234, 259–279, 290–310, and 321–341; these read AITMGIFWHLIGAASAACFYA, WSVGGIVSWLILPWTISALLL, FNLSTLLPVFLFGAMWGIGNI, MGIGIAIGITLIVGTLMTPII, TEGGHMTLLGVFVALIGVGIV, LLLAVMCGIFSAGMSFAMNAA, LPSYVVIMGGGALVNLGFCFI, ILLSALGGLMWYLQFFFYAWG, MSWMLHMSFYVLCGGLVGLVL, and VAVLSLGCVVIIIAANIVGLG.

The protein belongs to the L-rhamnose transporter (TC 2.A.7.6) family.

Its subcellular location is the cell inner membrane. It carries out the reaction L-rhamnopyranose(in) + H(+)(in) = L-rhamnopyranose(out) + H(+)(out). In terms of biological role, uptake of L-rhamnose across the cytoplasmic membrane with the concomitant transport of protons into the cell (symport system). The protein is L-rhamnose-proton symporter of Salmonella typhi.